Here is a 153-residue protein sequence, read N- to C-terminus: 6,7-dimethyl-8-ribityllumazine synthase (153 aa).

Residues Phe21, 55 to 57, and 79 to 81 each bind 5-amino-6-(D-ribitylamino)uracil; these read AFE and TVI. (2S)-2-hydroxy-3-oxobutyl phosphate is bound at residue 84 to 85; it reads AT. The active-site Proton donor is His87. 5-amino-6-(D-ribitylamino)uracil is bound at residue Phe112. (2S)-2-hydroxy-3-oxobutyl phosphate is bound at residue Arg126.

Belongs to the DMRL synthase family. Forms an icosahedral capsid composed of 60 subunits, arranged as a dodecamer of pentamers.

It catalyses the reaction (2S)-2-hydroxy-3-oxobutyl phosphate + 5-amino-6-(D-ribitylamino)uracil = 6,7-dimethyl-8-(1-D-ribityl)lumazine + phosphate + 2 H2O + H(+). The protein operates within cofactor biosynthesis; riboflavin biosynthesis; riboflavin from 2-hydroxy-3-oxobutyl phosphate and 5-amino-6-(D-ribitylamino)uracil: step 1/2. Catalyzes the formation of 6,7-dimethyl-8-ribityllumazine by condensation of 5-amino-6-(D-ribitylamino)uracil with 3,4-dihydroxy-2-butanone 4-phosphate. This is the penultimate step in the biosynthesis of riboflavin. This chain is 6,7-dimethyl-8-ribityllumazine synthase, found in Bacillus cereus (strain B4264).